We begin with the raw amino-acid sequence, 1242 residues long: DNA-directed RNA polymerase RPB2 homolog (1242 aa).

A C4-type zinc finger spans residues 1180 to 1201; the sequence is CRNCGEPAIYNASHPIYKCMNC.

Belongs to the RNA polymerase beta chain family. Part of the viral DNA-directed RNA polymerase that consists of 8 polII-like subunits (RPB1, RPB2, RPB3, RPB5, RPB6, RPB7, RPB9, RPB10), a capping enzyme and a termination factor.

The protein resides in the host cytoplasm. It is found in the virion. The catalysed reaction is RNA(n) + a ribonucleoside 5'-triphosphate = RNA(n+1) + diphosphate. In terms of biological role, catalytic component of the DNA-directed RNA polymerase (RNAP) that catalyzes the transcription in the cytoplasm of viral DNA into RNA using the four ribonucleoside triphosphates as substrates. Forms the polymerase active center together with RPB1. Part of the core element with the central large cleft, the clamp element that moves to open and close the cleft and the jaws that are thought to grab the incoming DNA template. The protein is DNA-directed RNA polymerase RPB2 homolog of African swine fever virus (isolate Tick/Malawi/Lil 20-1/1983) (ASFV).